The chain runs to 229 residues: Potassium/proton antiporter CemA (229 aa).

3 consecutive transmembrane segments (helical) span residues 7–27 (FTPL…SLLF), 107–127 (ILHF…SILG), and 189–209 (IISG…KYWI).

The protein belongs to the CemA family.

The protein localises to the plastid. The protein resides in the chloroplast inner membrane. The enzyme catalyses K(+)(in) + H(+)(out) = K(+)(out) + H(+)(in). Its function is as follows. Contributes to K(+)/H(+) antiport activity by supporting proton efflux to control proton extrusion and homeostasis in chloroplasts in a light-dependent manner to modulate photosynthesis. Prevents excessive induction of non-photochemical quenching (NPQ) under continuous-light conditions. Indirectly promotes efficient inorganic carbon uptake into chloroplasts. This is Potassium/proton antiporter CemA from Helianthus annuus (Common sunflower).